Consider the following 722-residue polypeptide: MNVNKKQESIPVNTGSESISSNDNERFEQGKGVGSNLGSHFFEPVEYYYSDGKPMNQTEASQMKGTFSRDFSLNEMNNEFITDSFFCTTTPDPKTESPSFVKYNAHCDDHPEISGHVSSNDKDFAYFEDKSENQPLVTLPNENNQVIEPLSSQSCKSQLSTQNYSESDFGWNQLCDLDPIFKSLAFTDDTNLFPAFADSEAALIMLKKREMTRVKHRAGRPRKYSYVNKDLNFEEGLPRRRGRPTGWRKYPEKEEIYPTLSPRIKKPRKVFDAVVIPVTIKPSIYTEPSLPHHIDWNNGCSEEFDFEPSREDEDFPDLTSDSTGQDPLSSEPTIFDISPLPSDMEPTFSENSLITINKMAIEERKQSRRLEQPLAESQHQEDLLNPYGVDQDFDETCINESEQQATHIPNSSIKFNYDYTPPKSATSHKHKRVDLLASRKENVWTGLYGKVQTEMVSNRGEAVLNENNSKNRTNVTKPNSYKNSVLSIGNNHSNHSNIIKPNTYKNTILSNENNTPNYSNVCLSTSLINRSLPSLKSTMHPGVNKDLITRPFKNVNKMSVRKALIKPFHPPISKISRTRLTVSSPERLYCAKPISMATAPSETDSKLINRIRNLELEIGGLKEQLSVVELALDTDKNSKQIQVVERKIQNWRKSAQLAVEVLFPVFSLKFTTMLQEVPQSVLRTSANDLRTKPCSIGTYLEQLQIPFHLLQYNSETESWDLE.

Disordered stretches follow at residues 1 to 35 and 301 to 342; these read MNVN…GVGS and SEEF…PLPS. The span at 9–22 shows a compositional bias: polar residues; sequence SIPVNTGSESISSN. Over residues 302 to 316 the composition is skewed to acidic residues; the sequence is EEFDFEPSREDEDFP. A compositionally biased stretch (polar residues) spans 319 to 332; it reads TSDSTGQDPLSSEP.

In terms of assembly, interacts with swi5 and rhp51.

Functionally, required for normal mating-type switching. The polypeptide is Mating-type switching protein swi2 (swi2) (Schizosaccharomyces pombe (strain 972 / ATCC 24843) (Fission yeast)).